A 242-amino-acid chain; its full sequence is Capsid protein (242 aa).

The Bipartite nuclear localization signal motif lies at 1–42 (MPYKRKLTSYFPQSKRFRGAKSGMAVVKTSASRRLYKKGKRK).

Belongs to the geminiviridae capsid protein family. Homomultimer. Binds to single-stranded and double-stranded viral DNA. Interacts (via nuclear localization signal) with host importin alpha-1a.

Its subcellular location is the virion. It localises to the host nucleus. In terms of biological role, encapsidates the viral genome into characteristic twinned ('geminate') particles. Binds the genomic viral ssDNA and shuttles it into and out of the cell nucleus. Plays a role in protection of the genome from degradation, virus acquisition and transmission by insect vectors, infectivity, and systemic movement. The CP of monopartite geminiviruses is absolutely essential for virus movement. The protein is Capsid protein of Solanum lycopersicum (Tomato).